A 450-amino-acid polypeptide reads, in one-letter code: Probable ECA polymerase (450 aa).

11 consecutive transmembrane segments (helical) span residues 6–26 (FSGLLVVWLLSTLFIATLTWF), 37–57 (VFFSLLFLLTFFFGFPLTSVL), 63–83 (VGVAPPEILLQALLSAACFYA), 120–140 (LMGIALVSVGIFFMHNGFLLF), 155–175 (GVALKRFFYFFIPAMLVIYFL), 181–201 (AWLFFLVSTVAFGLLTYMIVG), 207–227 (IIIAFAIFLFIGIIRGWISLW), 228–248 (MLVAAGVLGIVGMFWLALKRY), 341–361 (LVVMGGALFIPLGAVAVGLII), 378–398 (YKAAILHSFCFGAIFNMIVLA), and 410–430 (VFFLVIFGACLLVAKLLFWLF).

This sequence belongs to the WzyE family. Probably part of a complex composed of WzxE, WzyE and WzzE.

Its subcellular location is the cell inner membrane. Its pathway is bacterial outer membrane biogenesis; enterobacterial common antigen biosynthesis. Functionally, probably involved in the polymerization of enterobacterial common antigen (ECA) trisaccharide repeat units. The protein is Probable ECA polymerase of Citrobacter koseri (strain ATCC BAA-895 / CDC 4225-83 / SGSC4696).